Reading from the N-terminus, the 341-residue chain is MLQVVQSPHNLVFMGSIRSVVACLSLAAVARKMTAATGQSVSGTSAAAAGLLRLTSVPGYDHNRVNDVLLLRPAAETQRRCDNETQNLQDGNDHVVFFPGDIQNFQQEMALQPDAAPWQCWSLERVGLTLAHRFPGCHIWVIRASQMYLHKFSCYQNFVESNLFGAPEHSADYGAIRHLRALLGHSMQQAGLPNPLPPLSGTSTPGPLPAGFSLTIVGFSKGCVVLNQIVYELAGARADPELQLFLDRVSALYWLDGGHPGGSETWVTDKCALGELASSGVAVHAHVTPYEVRDPMRAWVGREHRHFIKTLEDLGARVSHKLHFEDEPASIDNHFRVIQEF.

The N-terminal 35 residues, 1–35 (MLQVVQSPHNLVFMGSIRSVVACLSLAAVARKMTA), are a transit peptide targeting the mitochondrion.

This sequence belongs to the C2orf69 family.

It is found in the mitochondrion matrix. In terms of biological role, may play a role in the respiratory chain. The chain is Mitochondrial protein C2orf69 homolog from Danio rerio (Zebrafish).